A 150-amino-acid chain; its full sequence is Regulatory protein RecX (150 aa).

This sequence belongs to the RecX family.

It is found in the cytoplasm. Functionally, modulates RecA activity. The polypeptide is Regulatory protein RecX (Acidithiobacillus ferrooxidans (strain ATCC 23270 / DSM 14882 / CIP 104768 / NCIMB 8455) (Ferrobacillus ferrooxidans (strain ATCC 23270))).